A 256-amino-acid chain; its full sequence is Imidazole glycerol phosphate synthase subunit HisF (256 aa).

Active-site residues include Asp12 and Asp131.

It belongs to the HisA/HisF family. Heterodimer of HisH and HisF.

Its subcellular location is the cytoplasm. The enzyme catalyses 5-[(5-phospho-1-deoxy-D-ribulos-1-ylimino)methylamino]-1-(5-phospho-beta-D-ribosyl)imidazole-4-carboxamide + L-glutamine = D-erythro-1-(imidazol-4-yl)glycerol 3-phosphate + 5-amino-1-(5-phospho-beta-D-ribosyl)imidazole-4-carboxamide + L-glutamate + H(+). It participates in amino-acid biosynthesis; L-histidine biosynthesis; L-histidine from 5-phospho-alpha-D-ribose 1-diphosphate: step 5/9. Functionally, IGPS catalyzes the conversion of PRFAR and glutamine to IGP, AICAR and glutamate. The HisF subunit catalyzes the cyclization activity that produces IGP and AICAR from PRFAR using the ammonia provided by the HisH subunit. This Bifidobacterium longum (strain NCC 2705) protein is Imidazole glycerol phosphate synthase subunit HisF.